The primary structure comprises 162 residues: Cytochrome c-type biogenesis protein CcmE (162 aa).

The Cytoplasmic segment spans residues 1-13; that stretch reads MSFWPQSRKARRR. The chain crosses the membrane as a helical; Signal-anchor for type II membrane protein span at residues 14–34; it reads LTILLAIAPVLALAVGLALYG. Residues 35–162 are Periplasmic-facing; sequence LRDSISLFYT…DAPAYGSQKP (128 aa). Residues histidine 128 and tyrosine 132 each coordinate heme. The span at 140–151 shows a compositional bias: basic and acidic residues; sequence ALKEQGEWRGEG. Residues 140–162 form a disordered region; that stretch reads ALKEQGEWRGEGADAPAYGSQKP.

This sequence belongs to the CcmE/CycJ family.

It is found in the cell inner membrane. Functionally, heme chaperone required for the biogenesis of c-type cytochromes. Transiently binds heme delivered by CcmC and transfers the heme to apo-cytochromes in a process facilitated by CcmF and CcmH. The chain is Cytochrome c-type biogenesis protein CcmE from Caulobacter vibrioides (strain ATCC 19089 / CIP 103742 / CB 15) (Caulobacter crescentus).